The primary structure comprises 536 residues: SNW domain-containing protein 1 (536 aa).

The segment at 1 to 44 is disordered; the sequence is MALTSFLPAPTQLSQDQLEAEERARSQRSLQTSLVSSRREPPPY. Ala-2 bears the N-acetylalanine mark. Ser-14 carries the phosphoserine modification. Over residues 27–36 the composition is skewed to polar residues; the sequence is QRSLQTSLVS. The interaction with PPIL1 stretch occupies residues 59-79; that stretch reads GDGGAFPEIHVAQYPLDMGRK. Glycyl lysine isopeptide (Lys-Gly) (interchain with G-Cter in SUMO2) cross-links involve residues Lys-81, Lys-97, Lys-115, Lys-122, Lys-141, Lys-158, and Lys-170. Residues 174–339 form an SNW region; it reads AQYIRYTPSQ…KARERRAGIK (166 aa). Ser-182 and Ser-190 each carry phosphoserine. A Glycyl lysine isopeptide (Lys-Gly) (interchain with G-Cter in SUMO2) cross-link involves residue Lys-193. Positions 212–233 are disordered; the sequence is FKINKKIPRGPPSPPAPVMHSP. Residues Ser-224, Ser-232, and Ser-234 each carry the phosphoserine modification. Residues Lys-240, Lys-258, Lys-286, Lys-339, Lys-344, Lys-416, and Lys-441 each participate in a glycyl lysine isopeptide (Lys-Gly) (interchain with G-Cter in SUMO2) cross-link. The disordered stretch occupies residues 311–386; sequence KMAQKEKEKH…RSKLQRNENR (76 aa). Residue Ser-446 is modified to Phosphoserine. Residue Lys-452 forms a Glycyl lysine isopeptide (Lys-Gly) (interchain with G-Cter in SUMO2) linkage. Composition is skewed to basic and acidic residues over residues 467–489 and 503–530; these read IKTNRFVPDKEFSGSDRKQRGRE and KFLEEAKQHGGSKRPSDSSRPKEHEHEG. The interval 467-536 is disordered; that stretch reads IKTNRFVPDK…EHEGKKRRKE (70 aa). A phosphoserine mark is found at Ser-479 and Ser-481. Residue Lys-509 forms a Glycyl lysine isopeptide (Lys-Gly) (interchain with G-Cter in SUMO2) linkage.

Belongs to the SNW family. In terms of assembly, identified in the spliceosome C complex. Associates with U4/U6-U5 tri-small nuclear ribonucleoproteins (U4/U6-U5 tri-snRNPs). Component of the minor spliceosome, which splices U12-type introns. Interacts with SKI, SMAD2,SMAD3, RBPJ, RB1, PABPN1, MAGEA1, SIRT1, FOXN3, U2AF2, PPIL1, DAXX and ATP1B4. Interacts with VDR and RXRA; preferentially associates with VDR:RXRA heterodimers. Interacts with NCOR2. Interacts with MAML1. Interacts with NOTCH1 NICD; the interaction involves multimerized NOTCH1 NICD. Forms a complex with NOTCH1 NICD and MAML1; the association is dissociated by RBPJ. Associates with positive transcription elongation factor b (P-TEFb). Component of the SNARP complex which consists at least of SNIP1, SNW1, THRAP3, BCLAF1 and PNN.

It localises to the nucleus. In terms of biological role, involved in pre-mRNA splicing as component of the spliceosome. As a component of the minor spliceosome, involved in the splicing of U12-type introns in pre-mRNAs. Required in the specific splicing of CDKN1A pre-mRNA; the function probably involves the recruitment of U2AF2 to the mRNA. May recruit PPIL1 to the spliceosome. May be involved in cyclin-D1/CCND1 mRNA stability through the SNARP complex which associates with both the 3'end of the CCND1 gene and its mRNA. Involved in transcriptional regulation. Modulates TGF-beta-mediated transcription via association with SMAD proteins, MYOD1-mediated transcription via association with PABPN1, RB1-mediated transcriptional repression, and retinoid-X receptor (RXR)- and vitamin D receptor (VDR)-dependent gene transcription in a cell line-specific manner probably involving coactivators NCOA1 and GRIP1. Is involved in NOTCH1-mediated transcriptional activation. Binds to multimerized forms of Notch intracellular domain (NICD) and is proposed to recruit transcriptional coactivators such as MAML1 to form an intermediate preactivation complex which associates with DNA-bound CBF-1/RBPJ to form a transcriptional activation complex by releasing SNW1 and redundant NOTCH1 NICD. The protein is SNW domain-containing protein 1 (Snw1) of Mus musculus (Mouse).